A 192-amino-acid chain; its full sequence is Pyruvate kinase (192 aa).

Arg41 is a binding site for substrate. K(+) is bound by residues Asn43, Ser45, Asp75, and Thr76. Residue 43–46 (NFSH) participates in ATP binding.

This sequence belongs to the pyruvate kinase family. Mg(2+) is required as a cofactor. It depends on K(+) as a cofactor.

The catalysed reaction is pyruvate + ATP = phosphoenolpyruvate + ADP + H(+). Its pathway is carbohydrate degradation; glycolysis; pyruvate from D-glyceraldehyde 3-phosphate: step 5/5. The sequence is that of Pyruvate kinase (pyk) from Spiroplasma citri.